A 22-amino-acid polypeptide reads, in one-letter code: thr operon leader peptide (22 aa).

This sequence belongs to the thr operon leader peptide family.

Its function is as follows. This protein is involved in control of the biosynthesis of threonine. This is thr operon leader peptide from Yersinia enterocolitica serotype O:8 / biotype 1B (strain NCTC 13174 / 8081).